A 151-amino-acid polypeptide reads, in one-letter code: Ribosome maturation factor RimP (151 aa).

This sequence belongs to the RimP family.

The protein localises to the cytoplasm. Functionally, required for maturation of 30S ribosomal subunits. The polypeptide is Ribosome maturation factor RimP (Shewanella amazonensis (strain ATCC BAA-1098 / SB2B)).